The chain runs to 190 residues: Protein shisa-like-2A (190 aa).

A run of 2 helical transmembrane segments spans residues 48–68 (SFFP…LIGL) and 70–90 (VAAV…YLFI).

The protein belongs to the shisa family.

The protein localises to the membrane. The sequence is that of Protein shisa-like-2A from Homo sapiens (Human).